The chain runs to 304 residues: Protease HtpX homolog (304 aa).

The next 2 membrane-spanning stretches (helical) occupy residues 14–34 and 39–59; these read IFII…IGII and YLNG…IMVM. Zn(2+) is bound at residue His144. The active site involves Glu145. Zn(2+) is bound at residue His148. 2 helical membrane passes run 159–179 and 202–222; these read IAIA…RMIF and AIIY…ATAI. Zn(2+) is bound at residue Glu231.

This sequence belongs to the peptidase M48B family. Zn(2+) serves as cofactor.

The protein localises to the cell membrane. The chain is Protease HtpX homolog from Listeria monocytogenes serotype 4b (strain CLIP80459).